The primary structure comprises 744 residues: Cullin-1 (744 aa).

A Cullin neddylation domain is found at 674-736 (DRRYAIDASI…RDYLERDKDN (63 aa)).

Belongs to the cullin family. Part of a SCF (SKP1-CUL1-F-box protein) E3 ubiquitin-protein ligase complex. Is able to form the SCF complex together with SKP1 and the rice black streaked dwarf virus RBSDV protein P7-2. Interacts with D3. Post-translationally, neddylated (rubylated). Deneddylation occurs upon interaction with the COP9 signalosome (CSN) complex. In terms of tissue distribution, expressed in dry seeds and coleoptiles.

Functionally, involved in ubiquitination and subsequent proteasomal degradation of target proteins. The sequence is that of Cullin-1 from Oryza sativa subsp. japonica (Rice).